The primary structure comprises 138 residues: Small ribosomal subunit protein uS11c (138 aa).

Positions 1 to 22 are disordered; the sequence is MTKPIPRIGSRRNGRIGSRKNA. The segment covering 9 to 22 has biased composition (basic residues); sequence GSRRNGRIGSRKNA.

Belongs to the universal ribosomal protein uS11 family. As to quaternary structure, part of the 30S ribosomal subunit.

The protein localises to the plastid. It is found in the chloroplast. The protein is Small ribosomal subunit protein uS11c of Dioscorea elephantipes (Elephant's foot yam).